Here is a 1822-residue protein sequence, read N- to C-terminus: CDK5 regulatory subunit-associated protein 2 (1822 aa).

Residues 50-93 are CM1 motif; interacts with the gTuRC; sequence KVSPTRARNMKDFENQITELKKENFNLKLRIYFLEERIQQEFAG. The interaction with NCKAP5L stretch occupies residues 57–195; the sequence is RNMKDFENQI…TEKALRLSLE (139 aa). A phosphoserine mark is found at S485 and S544. The tract at residues 1022–1046 is disordered; the sequence is FQDNPGEQEGPETTQSAGRDKDMDS. Residue T1195 is modified to Phosphothreonine. The segment at 1201–1822 is interaction with PCNT and AKAP9; sequence GKMLESLKQQ…GASSPSRPGS (622 aa). 2 positions are modified to phosphoserine: S1243 and S1245. Positions 1350-1391 are disordered; the sequence is YHHLLPESPEPSASHALSDDEMSEKSFLSRDPKPDSDTEKYP. A compositionally biased stretch (basic and acidic residues) spans 1372–1389; the sequence is SEKSFLSRDPKPDSDTEK. 3 positions are modified to phosphoserine: S1497, S1592, and S1595. The interval 1655–1697 is interaction with CDK5R1; the sequence is HMLGLIEDYDALYKQISWGQTLLAKMDVQTQEALSPTSHKLGP. Positions 1655–1822 are required for centrosomal attachment, Golgi targeting and CALM1 interaction; that stretch reads HMLGLIEDYD…GASSPSRPGS (168 aa). An interaction with PCNT region spans residues 1688 to 1822; sequence LSPTSHKLGP…GASSPSRPGS (135 aa). The required for centrosomal attachment, Golgi localization and CALM1 interaction stretch occupies residues 1790–1799; that stretch reads VITHQVLRKA. The residue at position 1822 (S1822) is a Phosphoserine.

As to quaternary structure, homodimer. Interacts with CDK5R1 (p35 form). CDK5RAP1, CDK5RAP2 and CDK5RAP3 show competitive binding to CDK5R1. May form a complex with CDK5R1 and CDK5. Interacts with pericentrin/PCNT; the interaction is leading to centrosomal and Golgi localization of CDK5RAP2 and PCNT. Interacts with AKAP9; the interaction targets CDK5RAP2 and AKAP9 to Golgi apparatus. Interacts with TUBG1; the interaction is leading to the centrosomal localization of CDK5RAP2 and TUBG1. Interacts with TUBGCP3. Interacts with CALM1. Interacts with CDC20. Interacts with CEP68; degradation of CEP68 in early mitosis leads to removal of CDK5RAP2 from the centrosome which promotes centriole disengagement and subsequent centriole separation. Interacts with NCKAP5L. Interacts with LGALS3BP; this interaction may connect the pericentrosomal complex to the gamma-tubulin ring complex (gTuRC) to promote microtubule assembly and acetylation. Contrary to human, chimpanzee, bovine and dog orthologous proteins, does not interact with EB1/MAPRE1, possibly due to a divergence at the level of the critical residue 939, which is a proline in MAPRE1-binding orthologs and a leucine in mouse and rat. Interacts with CCDC66. Associates (via CM1 motif) with TUBGCP2 of the gTuRC; the interaction plays a role in gTuRC activation. Phosphorylated in vitro by CDK5. As to expression, expressed in testis, thymus, heart and brain.

The protein resides in the cytoplasm. The protein localises to the cytoskeleton. Its subcellular location is the microtubule organizing center. It is found in the centrosome. It localises to the golgi apparatus. In terms of biological role, potential regulator of CDK5 activity via its interaction with CDK5R1. Negative regulator of centriole disengagement (licensing) which maintains centriole engagement and cohesion. Involved in regulation of mitotic spindle orientation. Plays a role in the spindle checkpoint activation by acting as a transcriptional regulator of both BUBR1 and MAD2 promoter. Together with EB1/MAPRE1, may promote microtubule polymerization, bundle formation, growth and dynamics at the plus ends. Regulates centrosomal maturation by recruitment of the gamma-tubulin ring complex (gTuRC) onto centrosomes. Required for the recruitment of AKAP9 to centrosomes. Plays a role in neurogenesis. Contrary to higher mammalian orthologs, including human, chimpanzee, bovine and dog, does not interact with EB1/MAPRE1, therefore its function in the regulation of microtubule dynamics is unclear. This Mus musculus (Mouse) protein is CDK5 regulatory subunit-associated protein 2 (Cdk5rap2).